Here is a 365-residue protein sequence, read N- to C-terminus: Membrane-bound lytic murein transglycosylase C (365 aa).

The N-terminal stretch at 1–19 is a signal peptide; the sequence is MKKYTKYLPLLLIIPFLAA. A lipid anchor (N-palmitoyl cysteine) is attached at C20. The S-diacylglycerol cysteine moiety is linked to residue C20.

Belongs to the transglycosylase Slt family.

The protein resides in the cell outer membrane. It catalyses the reaction Exolytic cleavage of the (1-&gt;4)-beta-glycosidic linkage between N-acetylmuramic acid (MurNAc) and N-acetylglucosamine (GlcNAc) residues in peptidoglycan, from either the reducing or the non-reducing ends of the peptidoglycan chains, with concomitant formation of a 1,6-anhydrobond in the MurNAc residue.. In terms of biological role, murein-degrading enzyme. May play a role in recycling of muropeptides during cell elongation and/or cell division. The sequence is that of Membrane-bound lytic murein transglycosylase C from Actinobacillus pleuropneumoniae serotype 5b (strain L20).